The sequence spans 136 residues: Small ribosomal subunit protein bS6 (136 aa).

Positions 97–128 are enriched in basic and acidic residues; that stretch reads EKEQSAMLSRPDRDDFPGKDEERPRPSRRQYE. The interval 97 to 136 is disordered; the sequence is EKEQSAMLSRPDRDDFPGKDEERPRPSRRQYEDVVEGGVE.

It belongs to the bacterial ribosomal protein bS6 family.

Functionally, binds together with bS18 to 16S ribosomal RNA. This is Small ribosomal subunit protein bS6 from Bartonella bacilliformis (strain ATCC 35685 / KC583 / Herrer 020/F12,63).